We begin with the raw amino-acid sequence, 1085 residues long: MLLKQIFLPFFVLFNAINAIDIYQNQVSRGTIDLSIGAITIHSGAYWSIIDNAISALVGTLTVQQDAGFYITGLNPLLGLQVELLGVLNSIKNDGIVSFNGLNSLVGPIYNLVGLSFQNNGEFYLSASGVAPPVFSITAADWHNNGLLVLAQAKRTSALANLGFPTGSIENQGSICLFGTAYQQLTSITGSGCISADRDSTIYIFSSLLPIATTQTLYLADRASSIVIQPVTLPATYTVRGFGNGNKVGISLPLLSVPLLGQPAYSYDPSSGVLTLRGLGVGLLSQRFQIGTGYDSSLLEIVTDDGAGLPTTLLGSVRYNGPVPNNAVPASCNCKYVPPSPGTDESSSLSSSTSEQSSSSATSVSASETSDTSSTQESSLSSEVSSTQEPSSSTPEPSSSSETSSTQESSSTEGPSSSTDSSTEASSSESSTAPSSSAEASSSTESSTEEPSSSTEGPSSSQESSSSEESSTQEPSSSTKESSSTEGPSSTEESSSTEGPSSSTDSSTDITSASSTDEQSSSGTGQSSTEDEPIDSTESDTSSATDSSTATDSSATNTDTNSESTDSSTATDTSSTDSNTASSTETNTDVTDSSTDSNTGATESSTATDTNTDATDSSTVSETGATDSSTATDTNTGATESSTDSNTGATDSSTATDTNTSATNTDTNTGSNTATNTDDNTATDTSSTETNTATNTDGTETNTGTTETNTDTSASNTDDNTGSNTATNTGGTDTNTDTNTGGTDTNTGTNTGGTDTKTGTNTATGTNTGATETNTATNTNGNGTNTNTGATDTATNTATGTNTNTGATDTNTNTNTGATVTNTATNTGDVSATKDIPSPTSTDEGSNNGGGSNNGSGSNNGSGNGSGSGSGSGNGSGDGSNNGSGNGSDNGSGSGNGSDNGSGSGSGSDNGSGSGSGSGSGSGNGSGSGSDNGSGSGNGSGSGSGSGSGSDNGSGSGSNNGSGNGSGNGSGSGSDNGSGNGSGSGSGSGSGNGSGNGSGSGSGSGSGNGSGSNNNNGSGSGSGSGNGQDNGIITSSIGQPGSSTSTQGPSSSNSATIPEQANSGNHIKFTLFNGLLIGLVPIVFM.

A signal peptide spans 1 to 19; the sequence is MLLKQIFLPFFVLFNAINA. The interval 339-1060 is disordered; that stretch reads PSPGTDESSS…SSNSATIPEQ (722 aa). Residues 342–528 show a composition bias toward low complexity; sequence GTDESSSLSS…QSSSGTGQSS (187 aa). A compositionally biased stretch (acidic residues) spans 529–538; sequence TEDEPIDSTE. Low complexity predominate over residues 539-828; sequence SDTSSATDSS…TVTNTATNTG (290 aa). N-linked (GlcNAc...) asparagine glycans are attached at residues Asn659, Asn782, Asn854, Asn860, Asn864, Asn874, Asn882, Asn886, Asn890, Asn896, Asn900, Asn910, Asn924, Asn932, Asn938, Asn952, Asn960, Asn964, Asn968, Asn976, Asn980, Asn992, Asn996, Asn1008, and Asn1016. The span at 847 to 1010 shows a compositional bias: gly residues; it reads NNGGGSNNGS…GSGSGSGNGS (164 aa). The span at 1018–1028 shows a compositional bias: gly residues; that stretch reads SGSGSGSGNGQ. Over residues 1031-1052 the composition is skewed to low complexity; it reads GIITSSIGQPGSSTSTQGPSSS. The GPI-anchor amidated asparagine moiety is linked to residue Asn1062. The propeptide at 1063 to 1085 is removed in mature form; that stretch reads SGNHIKFTLFNGLLIGLVPIVFM.

This sequence belongs to the HYR1/IFF family. In terms of processing, the GPI-anchor is attached to the protein in the endoplasmic reticulum and serves to target the protein to the cell surface. There, the glucosamine-inositol phospholipid moiety is cleaved off and the GPI-modified mannoprotein is covalently attached via its lipidless GPI glycan remnant to the 1,6-beta-glucan of the outer cell wall layer.

Its subcellular location is the secreted. It localises to the cell wall. It is found in the membrane. In terms of biological role, GPI-anchored cell wall protein involved in cell wall organization, hyphal growth, as well as in host-fungal interaction and virulence. The polypeptide is Cell wall protein IFF6 (IFF6) (Candida albicans (strain SC5314 / ATCC MYA-2876) (Yeast)).